The sequence spans 100 residues: MAKKSLIHREKKRQKLEQKYHLIRRSSKKEISKVPSLSDKWKIHGKLQSSPRNSAPTRLHRRCFSTGRPRANYRDFGLSGHILREMVHACLLPGATRSSW.

Belongs to the universal ribosomal protein uS14 family. Part of the 30S ribosomal subunit.

It is found in the plastid. The protein localises to the chloroplast. Binds 16S rRNA, required for the assembly of 30S particles. This Carica papaya (Papaya) protein is Small ribosomal subunit protein uS14c.